Consider the following 322-residue polypeptide: tRNA-dihydrouridine synthase B (322 aa).

FMN contacts are provided by residues 16 to 18 (PMA) and Gln70. The active-site Proton donor is the Cys100. FMN is bound by residues Lys139, 200-202 (NGD), and 224-225 (GR).

The protein belongs to the Dus family. DusB subfamily. Requires FMN as cofactor.

It carries out the reaction a 5,6-dihydrouridine in tRNA + NAD(+) = a uridine in tRNA + NADH + H(+). The enzyme catalyses a 5,6-dihydrouridine in tRNA + NADP(+) = a uridine in tRNA + NADPH + H(+). Its function is as follows. Catalyzes the synthesis of 5,6-dihydrouridine (D), a modified base found in the D-loop of most tRNAs, via the reduction of the C5-C6 double bond in target uridines. The sequence is that of tRNA-dihydrouridine synthase B from Vibrio cholerae serotype O1 (strain ATCC 39315 / El Tor Inaba N16961).